Here is a 144-residue protein sequence, read N- to C-terminus: Cell division protein SepF (144 aa).

The segment covering 14-31 (EDDEMNEVPYTESEEQQE) has biased composition (acidic residues). A disordered region spans residues 14–41 (EDDEMNEVPYTESEEQQEEIPQTQKNER).

This sequence belongs to the SepF family. As to quaternary structure, homodimer. Interacts with FtsZ.

It localises to the cytoplasm. In terms of biological role, cell division protein that is part of the divisome complex and is recruited early to the Z-ring. Probably stimulates Z-ring formation, perhaps through the cross-linking of FtsZ protofilaments. Its function overlaps with FtsA. The chain is Cell division protein SepF from Lactobacillus johnsonii (strain CNCM I-12250 / La1 / NCC 533).